We begin with the raw amino-acid sequence, 307 residues long: N-acetylneuraminate lyase (307 aa).

T51 and T52 together coordinate aceneuramate. Y143 serves as the catalytic Proton donor. The Schiff-base intermediate with substrate role is filled by K173. Residues S175, G199, D201, E202, and S218 each coordinate aceneuramate.

The protein belongs to the DapA family. NanA subfamily. In terms of assembly, homotetramer.

The protein resides in the cytoplasm. It catalyses the reaction aceneuramate = aldehydo-N-acetyl-D-mannosamine + pyruvate. The protein operates within amino-sugar metabolism; N-acetylneuraminate degradation. Catalyzes the cleavage of N-acetylneuraminic acid (sialic acid) to form pyruvate and N-acetylmannosamine via a Schiff base intermediate. It prevents sialic acids from being recycled and returning to the cell surface. Involved in the N-glycolylneuraminic acid (Neu5Gc) degradation pathway. This chain is N-acetylneuraminate lyase, found in Danio rerio (Zebrafish).